Here is a 210-residue protein sequence, read N- to C-terminus: Ribonuclease HII (210 aa).

The region spanning 16–207 (AIVVGVDEVG…VKKCIISTKN (192 aa)) is the RNase H type-2 domain. A divalent metal cation contacts are provided by D22, E23, and D116.

It belongs to the RNase HII family. It depends on Mn(2+) as a cofactor. The cofactor is Mg(2+).

It localises to the cytoplasm. The catalysed reaction is Endonucleolytic cleavage to 5'-phosphomonoester.. Endonuclease that specifically degrades the RNA of RNA-DNA hybrids. This chain is Ribonuclease HII, found in Anaplasma phagocytophilum (strain HZ).